The following is a 348-amino-acid chain: Dihydroorotase (348 aa).

Zn(2+) contacts are provided by His17 and His19. Substrate contacts are provided by residues 19–21 (HLR) and Asn45. Zn(2+) is bound by residues Lys103, His140, and His178. Lys103 carries the N6-carboxylysine modification. Residue His140 participates in substrate binding. Leu223 is a binding site for substrate. Asp251 provides a ligand contact to Zn(2+). Asp251 is a catalytic residue. Positions 255 and 267 each coordinate substrate.

The protein belongs to the metallo-dependent hydrolases superfamily. DHOase family. Class II DHOase subfamily. As to quaternary structure, homodimer. The cofactor is Zn(2+).

The catalysed reaction is (S)-dihydroorotate + H2O = N-carbamoyl-L-aspartate + H(+). It participates in pyrimidine metabolism; UMP biosynthesis via de novo pathway; (S)-dihydroorotate from bicarbonate: step 3/3. Its function is as follows. Catalyzes the reversible cyclization of carbamoyl aspartate to dihydroorotate. The protein is Dihydroorotase of Escherichia coli O6:H1 (strain CFT073 / ATCC 700928 / UPEC).